The sequence spans 193 residues: dCTP deaminase (193 aa).

DCTP contacts are provided by residues 110-115 (RSSLAR), Asp-128, 136-138 (VLE), Tyr-171, Lys-178, and Gln-182. Glu-138 acts as the Proton donor/acceptor in catalysis. Residues 170–181 (PYNRRQDAKYRD) show a composition bias toward basic and acidic residues. The tract at residues 170–193 (PYNRRQDAKYRDQQGAVASRIDKD) is disordered.

Belongs to the dCTP deaminase family. In terms of assembly, homotrimer.

It carries out the reaction dCTP + H2O + H(+) = dUTP + NH4(+). Its pathway is pyrimidine metabolism; dUMP biosynthesis; dUMP from dCTP (dUTP route): step 1/2. Its function is as follows. Catalyzes the deamination of dCTP to dUTP. The chain is dCTP deaminase from Enterobacter sp. (strain 638).